The sequence spans 251 residues: CDP-diacylglycerol pyrophosphatase (251 aa).

The helical transmembrane segment at 4-24 (AGLLFLVMIVIAVVAAGIGYW) threads the bilayer.

This sequence belongs to the Cdh family.

The protein resides in the cell inner membrane. The catalysed reaction is a CDP-1,2-diacyl-sn-glycerol + H2O = a 1,2-diacyl-sn-glycero-3-phosphate + CMP + 2 H(+). The protein operates within phospholipid metabolism; CDP-diacylglycerol degradation; phosphatidate from CDP-diacylglycerol: step 1/1. This is CDP-diacylglycerol pyrophosphatase from Escherichia coli (strain K12 / MC4100 / BW2952).